An 809-amino-acid chain; its full sequence is Quinate/shikimate dehydrogenase (quinone) (809 aa).

The next 5 membrane-spanning stretches (helical) occupy residues 14-34 (VWCF…VIGG), 41-61 (GGSW…FFMF), 68-88 (VWLY…DAGF), 90-110 (FWPL…VMLT), and 127-147 (AYVI…GMFI).

It belongs to the bacterial PQQ dehydrogenase family. Pyrroloquinoline quinone is required as a cofactor.

The protein localises to the cell membrane. It carries out the reaction L-quinate + a quinone = 3-dehydroquinate + a quinol. The enzyme catalyses shikimate + a quinone = 3-dehydroshikimate + a quinol. It functions in the pathway aromatic compound metabolism; 3,4-dihydroxybenzoate biosynthesis; 3-dehydroquinate from D-quinate (PQQ route): step 1/1. Functionally, can act either on quinate or on shikimate. This Acinetobacter baylyi (strain ATCC 33305 / BD413 / ADP1) protein is Quinate/shikimate dehydrogenase (quinone) (quiA).